Consider the following 444-residue polypeptide: MVVIKDIVAREILDSRGNPTIEVDVSTEGGVFRAAVPSGASTGIYEALELRDKDPKRYLGKGVLNAVEIVRQEIKPALLGKDPCDQKGIDMLMVEQLDGTKNEWGYSKSKLGANAILGVSIACCRAGAASKGLPLYKYIATLAGKTIDKMVMPVPFFNVINGGEHAGNGLALQEFLIAPVGAPNIREAIRYGSETYHHLKNVIKNKYGLDATNVGDEGGFAPNVATAEEALNLLVEAIKAAGYEGKIKIAFDAAASEFYKQDEKKYDLDYKCKTKNASKHLTGEKLKEVYEGWLKKYPIISVEDPFDQDDFASFSAFTKDVGEKTQVIGDDILVTNILRIEKALKDKACNCLLLKVNQIGSVTEAIEACLLAQKSGWGVQVSHRSGETEDSFIADLVVGLRCGQIKSGSPCRSERLCKYNQLMRIEESLGADCVYAGESFRHPK.

Residues His-165 and Glu-174 each contribute to the substrate site. Residue Glu-217 is the Proton donor of the active site. Residues Glu-303 and Asp-330 each coordinate substrate. The Proton acceptor role is filled by Lys-355. Substrate-binding positions include Ser-382 to Ser-385 and Lys-406.

The protein belongs to the enolase family. Homodimer. The cofactor is Mg(2+).

Its subcellular location is the cytoplasm. The enzyme catalyses (2R)-2-phosphoglycerate = phosphoenolpyruvate + H2O. It functions in the pathway carbohydrate degradation; glycolysis; pyruvate from D-glyceraldehyde 3-phosphate: step 4/5. The polypeptide is Enolase 1 (ENO1) (Toxoplasma gondii).